The sequence spans 137 residues: Nucleoside diphosphate kinase (137 aa).

Positions 11, 59, 87, 93, 104, and 114 each coordinate ATP. The active-site Pros-phosphohistidine intermediate is histidine 117.

Belongs to the NDK family. Homotetramer. The cofactor is Mg(2+).

It localises to the cytoplasm. The enzyme catalyses a 2'-deoxyribonucleoside 5'-diphosphate + ATP = a 2'-deoxyribonucleoside 5'-triphosphate + ADP. It catalyses the reaction a ribonucleoside 5'-diphosphate + ATP = a ribonucleoside 5'-triphosphate + ADP. Functionally, major role in the synthesis of nucleoside triphosphates other than ATP. The ATP gamma phosphate is transferred to the NDP beta phosphate via a ping-pong mechanism, using a phosphorylated active-site intermediate. In Frankia casuarinae (strain DSM 45818 / CECT 9043 / HFP020203 / CcI3), this protein is Nucleoside diphosphate kinase.